The sequence spans 326 residues: Balbiani ring protein 1 (326 aa).

Residues 1–33 (PSKSGPRPSKSGPRPSKSGPRPSKSGPRPSKSG) are compositionally biased toward low complexity. The tract at residues 1-119 (PSKSGPRPSK…RESPVCDDAM (119 aa)) is disordered. The segment covering 34-51 (PRPEKCGSAMRKAEAEKC) has biased composition (basic and acidic residues). The span at 93–102 (VTPTPEVPTT) shows a compositional bias: low complexity. A compositionally biased stretch (basic and acidic residues) spans 107-119 (SESRESPVCDDAM).

In terms of tissue distribution, salivary gland.

It localises to the secreted. Its function is as follows. Used by the larvae to construct a supramolecular structure, the larval tube. This is Balbiani ring protein 1 (BR1) from Chironomus pallidivittatus (Midge).